A 130-amino-acid polypeptide reads, in one-letter code: Small ribosomal subunit protein uS9 (130 aa).

The interval 109–130 is disordered; it reads RVKERKKPGLKKARKARQFSKR. Residues 111–130 are compositionally biased toward basic residues; it reads KERKKPGLKKARKARQFSKR.

It belongs to the universal ribosomal protein uS9 family.

The chain is Small ribosomal subunit protein uS9 from Mycoplasma mobile (strain ATCC 43663 / 163K / NCTC 11711) (Mesomycoplasma mobile).